The primary structure comprises 1140 residues: Eukaryotic translation initiation factor 3 subunit A (1140 aa).

The 183-residue stretch at 319–501 (LQRMAAHVLL…NSIYFGTDLT (183 aa)) folds into the PCI domain. Composition is skewed to basic and acidic residues over residues 588-623 (QNNA…EERE) and 829-899 (AAEE…RGGD). Disordered regions lie at residues 588–630 (QNNA…HQNE) and 829–1140 (AAEE…VKRR). Residue S908 is modified to Phosphoserine. 4 stretches are compositionally biased toward basic and acidic residues: residues 920-976 (ERND…EPDS), 990-1051 (SRDD…EPQR), 1059-1086 (DAPR…RGDQ), and 1109-1130 (TREE…KAGD).

It belongs to the eIF-3 subunit A family. In terms of assembly, component of the eukaryotic translation initiation factor 3 (eIF-3) complex. The eIF-3 complex interacts with pix.

It localises to the cytoplasm. In terms of biological role, RNA-binding component of the eukaryotic translation initiation factor 3 (eIF-3) complex, which is involved in protein synthesis of a specialized repertoire of mRNAs and, together with other initiation factors, stimulates binding of mRNA and methionyl-tRNAi to the 40S ribosome. The eIF-3 complex specifically targets and initiates translation of a subset of mRNAs involved in cell proliferation. The protein is Eukaryotic translation initiation factor 3 subunit A of Drosophila melanogaster (Fruit fly).